The following is a 373-amino-acid chain: Lipoyl synthase (373 aa).

The interval 12–36 (HVVSNDHPSSSPLQPGVKQSGEDKI) is disordered. [4Fe-4S] cluster-binding residues include Cys-81, Cys-86, Cys-92, Cys-107, Cys-111, Cys-114, and Ser-323. One can recognise a Radical SAM core domain in the interval 93–312 (FSHGTATFMI…EEYGMALGFS (220 aa)). Positions 346-373 (PAVSSTEHRERHTIASKSASKTESIPHR) are disordered. Positions 360–373 (ASKSASKTESIPHR) are enriched in polar residues.

Belongs to the radical SAM superfamily. Lipoyl synthase family. [4Fe-4S] cluster is required as a cofactor.

The protein localises to the cytoplasm. It catalyses the reaction [[Fe-S] cluster scaffold protein carrying a second [4Fe-4S](2+) cluster] + N(6)-octanoyl-L-lysyl-[protein] + 2 oxidized [2Fe-2S]-[ferredoxin] + 2 S-adenosyl-L-methionine + 4 H(+) = [[Fe-S] cluster scaffold protein] + N(6)-[(R)-dihydrolipoyl]-L-lysyl-[protein] + 4 Fe(3+) + 2 hydrogen sulfide + 2 5'-deoxyadenosine + 2 L-methionine + 2 reduced [2Fe-2S]-[ferredoxin]. It participates in protein modification; protein lipoylation via endogenous pathway; protein N(6)-(lipoyl)lysine from octanoyl-[acyl-carrier-protein]: step 2/2. Functionally, catalyzes the radical-mediated insertion of two sulfur atoms into the C-6 and C-8 positions of the octanoyl moiety bound to the lipoyl domains of lipoate-dependent enzymes, thereby converting the octanoylated domains into lipoylated derivatives. This is Lipoyl synthase from Xylella fastidiosa (strain M12).